We begin with the raw amino-acid sequence, 335 residues long: Glyceraldehyde-3-phosphate dehydrogenase 2 (335 aa).

NAD(+) contacts are provided by residues 13 to 14 (RI), aspartate 35, and arginine 80. Phosphoserine is present on residues serine 125 and serine 151. 151–153 (SCT) provides a ligand contact to D-glyceraldehyde 3-phosphate. Residue cysteine 152 is the Nucleophile of the active site. Phosphothreonine is present on residues threonine 153, threonine 154, threonine 182, and threonine 184. Position 182 (threonine 182) interacts with D-glyceraldehyde 3-phosphate. Residues serine 192, serine 203, and serine 209 each carry the phosphoserine modification. Threonine 211 is subject to Phosphothreonine. D-glyceraldehyde 3-phosphate is bound by residues 211–212 (TG) and arginine 234. Residue threonine 237 is modified to Phosphothreonine. At serine 241 the chain carries Phosphoserine. NAD(+) is bound at residue asparagine 316.

It belongs to the glyceraldehyde-3-phosphate dehydrogenase family. As to quaternary structure, homotetramer.

The protein localises to the cytoplasm. It carries out the reaction D-glyceraldehyde 3-phosphate + phosphate + NAD(+) = (2R)-3-phospho-glyceroyl phosphate + NADH + H(+). The protein operates within carbohydrate degradation; glycolysis; pyruvate from D-glyceraldehyde 3-phosphate: step 1/5. The chain is Glyceraldehyde-3-phosphate dehydrogenase 2 (gpd3) from Schizosaccharomyces pombe (strain 972 / ATCC 24843) (Fission yeast).